Reading from the N-terminus, the 209-residue chain is GTP cyclohydrolase-2 (209 aa).

Residue arginine 49 to glutamate 53 participates in GTP binding. Positions 54, 65, and 67 each coordinate Zn(2+). Residues glutamine 70, glutamate 92 to arginine 94, and threonine 114 each bind GTP. Aspartate 126 (proton acceptor) is an active-site residue. Arginine 128 (nucleophile) is an active-site residue. The GTP site is built by threonine 149 and lysine 154.

The protein belongs to the GTP cyclohydrolase II family. It depends on Zn(2+) as a cofactor.

The catalysed reaction is GTP + 4 H2O = 2,5-diamino-6-hydroxy-4-(5-phosphoribosylamino)-pyrimidine + formate + 2 phosphate + 3 H(+). It functions in the pathway cofactor biosynthesis; riboflavin biosynthesis; 5-amino-6-(D-ribitylamino)uracil from GTP: step 1/4. Functionally, catalyzes the conversion of GTP to 2,5-diamino-6-ribosylamino-4(3H)-pyrimidinone 5'-phosphate (DARP), formate and pyrophosphate. The chain is GTP cyclohydrolase-2 from Shewanella pealeana (strain ATCC 700345 / ANG-SQ1).